Here is a 234-residue protein sequence, read N- to C-terminus: Orotidine 5'-phosphate decarboxylase (234 aa).

Residues D14, K36, 63–72 (DMKLLDIDNT), T118, R179, Q188, G208, and R209 each bind substrate. Residue K65 is the Proton donor of the active site.

Belongs to the OMP decarboxylase family. Type 1 subfamily. As to quaternary structure, homodimer.

The catalysed reaction is orotidine 5'-phosphate + H(+) = UMP + CO2. Its pathway is pyrimidine metabolism; UMP biosynthesis via de novo pathway; UMP from orotate: step 2/2. Its function is as follows. Catalyzes the decarboxylation of orotidine 5'-monophosphate (OMP) to uridine 5'-monophosphate (UMP). The polypeptide is Orotidine 5'-phosphate decarboxylase (Rhizobium meliloti (strain 1021) (Ensifer meliloti)).